The sequence spans 840 residues: Intracellular phospholipase A1 (840 aa).

2 disordered regions span residues Met-1 to Lys-142 and Lys-666 to Ala-718. Over residues Gly-26–Met-39 the composition is skewed to basic and acidic residues. Residues Ser-97–Ser-111 show a composition bias toward low complexity. The DDHD domain occupies Leu-564–Cys-827. The span at Asn-668–Gly-680 shows a compositional bias: basic and acidic residues. Over residues Asp-681–Glu-694 the composition is skewed to acidic residues.

The protein belongs to the PA-PLA1 family.

The catalysed reaction is 1,2-dihexadecanoyl-sn-glycero-3-phospho-(1D-myo-inositol) + H2O = 2-hexadecanoyl-sn-glycero-3-phospho-(1D-myo-inositol) + hexadecanoate + H(+). It carries out the reaction a 1,2-diacyl-sn-glycero-3-phospho-L-serine + H2O = a 2-acyl-sn-glycero-3-phospho-L-serine + a fatty acid + H(+). It catalyses the reaction 1-hexadecanoyl-2-(9Z-octadecenoyl)-sn-glycero-3-phospho-L-serine + H2O = 2-(9Z-octadecenoyl)-sn-glycero-3-phospho-L-serine + hexadecanoate + H(+). The enzyme catalyses 1,2-di-(9Z-octadecenoyl)-sn-glycero-3-phosphocholine + H2O = (9Z-octadecenoyl)-sn-glycero-3-phosphocholine + (9Z)-octadecenoate + H(+). The catalysed reaction is a 1,2-diacyl-sn-glycero-3-phosphocholine + H2O = a 1-acyl-sn-glycero-3-phosphocholine + a fatty acid + H(+). It carries out the reaction 1,2-dihexadecanoyl-sn-glycero-3-phosphocholine + H2O = 1-hexadecanoyl-sn-glycero-3-phosphocholine + hexadecanoate + H(+). With respect to regulation, inhibited by E-6-bromomethylene-3-1-naphthalenyl-2H-tetrahydropyran-2-one (BEL) in vitro. Its function is as follows. Hydrolyzes the ester bond at the sn-1 position of glycerophospholipids and produces 2-acyl lysophospholipids, being phosphatidylinositol (PI) its major substrate. PI is a versatile lipid that not only serves as a structural component of cellular membranes, but also plays important roles in signal transduction through distinct phosphorylated derivatives of the inositol head group. Catalyzes the hydrolysis of phosphatidylcholine at sn-2 position in vitro. Regulates asymmetric division, an important property of stem cells in C.elegans, by controlling the subcellular localizations of beta-catenin. This chain is Intracellular phospholipase A1, found in Caenorhabditis elegans.